A 78-amino-acid chain; its full sequence is Xibalbin-13 1 (78 aa).

Residues 1–27 (MKEANTRRYIHLCLVVVLVSTIITTEA) form the signal peptide. Residues 28-31 (EDDR) constitute a propeptide that is removed on maturation. Disulfide bonds link Cys34/Cys49, Cys41/Cys54, Cys48/Cys65, and Cys56/Cys63. Ser76 carries the post-translational modification Serine amide.

It belongs to the xibalbin-13 family. As to expression, expressed by the venom gland.

It is found in the secreted. In terms of biological role, probable neurotoxin. Strongly inhibits voltage-gated potassium channels (Kv1.1/KCNA1, Kv1.2/KCNA2, Kv1.3/KCNA3, and Kv1.6/KCNA6) and mildly inhibits sodium channels (Nav1.2/SCN2A, Nav1.4/SCN4A, Nav1.5/SCN5A, Nav1.6/SCN8A, and BgNav). Induces activation of protein kinase A type II (PKA-II) and MAP kinase Erk1/2 in primary nociceptive and non-nociceptive sensory neurons. Does not show cytotoxic activity. Does not have an impact on Ca2+, cAMP, and NO signaling in the cell types analyzed. Does not interfere with the adhesion of leukocytes to endothelial cells. This Xibalbanus tulumensis (Blind cave remipede) protein is Xibalbin-13 1.